The sequence spans 178 residues: uncharacterized protein (178 aa).

The interval 64-103 is disordered; it reads GVSDNTNKTTAKDNVSDKSSENEVAQPKQVTPPVDATGNT. Residues 73 to 84 are compositionally biased toward basic and acidic residues; that stretch reads TAKDNVSDKSSE.

This is an uncharacterized protein from Acidianus sp. F28 (AFV-2).